An 85-amino-acid polypeptide reads, in one-letter code: UPF0386 protein Bind_1628 (85 aa).

The protein belongs to the UPF0386 family.

The polypeptide is UPF0386 protein Bind_1628 (Beijerinckia indica subsp. indica (strain ATCC 9039 / DSM 1715 / NCIMB 8712)).